The primary structure comprises 310 residues: p-hydroxybenzoic acid efflux pump subunit AaeA (310 aa).

Residues 12–32 (AITVVLVILAFIAIFNAWVYY) traverse the membrane as a helical segment.

It belongs to the membrane fusion protein (MFP) (TC 8.A.1) family.

The protein resides in the cell inner membrane. Forms an efflux pump with AaeB. The sequence is that of p-hydroxybenzoic acid efflux pump subunit AaeA from Escherichia coli O17:K52:H18 (strain UMN026 / ExPEC).